The sequence spans 456 residues: MLDYTPCEEVTREAVTINPAKTCQPIGAVYAALGVHNCMPHSHGSQGCLSYLRMCLSRHYREAALATTSSFSEGTAVFGVSANLKEALVNLTTIYKPEVIAIHTTCVAETIGDDVGVILEDVEAEELIDPSIKICAASTPSYVGSHITGYDNMVKSFVTTFTKKSKPNGKLNIIPGFVEPGDIREIKRILSIMEISSIVFPDTTDVFGAPLTGEPGMYPKGGTPIGDIEDSANSVGTIALCRMAGGSAAKILEGRYKVPAKIGPTPIGIRNTDRFVMNAAKLANVAIPPELEDERGRLVDMMTDAHPHYHGKKVAIYGDPDILTGLTSLVMEMGMEPVVVLTGTKSSEFEKEVEGLIGPEHPEADVISGGDMFTLHQIIKRKPVDLLIGNTYGKFISRAEDVPLVRVGFPIMDRANLHYFPIMGYAGAARLVERIANTLLDRKDRDAPDWLLETIQ.

Residues Cys-23, Cys-48, Cys-106, and Ser-141 each coordinate [8Fe-7S] cluster.

This sequence belongs to the NifD/NifK/NifE/NifN family. Tetramer of two alpha and two beta chains. Forms complex with the iron protein (nitrogenase component 2). [8Fe-7S] cluster serves as cofactor.

The catalysed reaction is N2 + 8 reduced [2Fe-2S]-[ferredoxin] + 16 ATP + 16 H2O = H2 + 8 oxidized [2Fe-2S]-[ferredoxin] + 2 NH4(+) + 16 ADP + 16 phosphate + 6 H(+). In terms of biological role, this molybdenum-iron protein is part of the nitrogenase complex that catalyzes the key enzymatic reactions in nitrogen fixation. The sequence is that of Nitrogenase molybdenum-iron protein beta chain (nifK2) from Methanosarcina barkeri.